We begin with the raw amino-acid sequence, 471 residues long: Glutamate--tRNA ligase (471 aa).

The 'HIGH' region signature appears at 9–19; the sequence is PSPTGYLHVGG. The 'KMSKS' region motif lies at 237–241; it reads KLSKR. An ATP-binding site is contributed by K240.

Belongs to the class-I aminoacyl-tRNA synthetase family. Glutamate--tRNA ligase type 1 subfamily. In terms of assembly, monomer.

It is found in the cytoplasm. It catalyses the reaction tRNA(Glu) + L-glutamate + ATP = L-glutamyl-tRNA(Glu) + AMP + diphosphate. Functionally, catalyzes the attachment of glutamate to tRNA(Glu) in a two-step reaction: glutamate is first activated by ATP to form Glu-AMP and then transferred to the acceptor end of tRNA(Glu). The protein is Glutamate--tRNA ligase of Pectobacterium atrosepticum (strain SCRI 1043 / ATCC BAA-672) (Erwinia carotovora subsp. atroseptica).